The chain runs to 147 residues: MSFSAAQVDTVRSNWCSMTADIDAAGYRIFELLFQRNPDYQSKFKAFKGLAVSALKGNPNAEKHIRIVLGGLGRILGALNTPELDVIYKEMASNHKPRGVMKQQFKDMGQAIVTALSEIQSKSGGSFDRATWEALFESVANGIGQYQ.

A Globin domain is found at 2-147; that stretch reads SFSAAQVDTV…SVANGIGQYQ (146 aa). Heme b is bound by residues histidine 64 and histidine 95.

The protein belongs to the globin family. As to quaternary structure, homodimer or homooligomer.

This Aequiyoldia eightsii (Antarctic yoldia) protein is Globin.